A 242-amino-acid chain; its full sequence is Uridylate kinase (242 aa).

Residue 11–14 coordinates ATP; sequence KLSG. An involved in allosteric activation by GTP region spans residues 19–24; sequence GNMGYG. UMP is bound at residue G53. Residues G54 and R58 each coordinate ATP. UMP contacts are provided by residues D73 and 134 to 141; that span reads SGNPFFTT. ATP is bound by residues T161, Y167, and D170.

Belongs to the UMP kinase family. As to quaternary structure, homohexamer.

It is found in the cytoplasm. It catalyses the reaction UMP + ATP = UDP + ADP. It participates in pyrimidine metabolism; CTP biosynthesis via de novo pathway; UDP from UMP (UMPK route): step 1/1. Allosterically activated by GTP. Inhibited by UTP. Catalyzes the reversible phosphorylation of UMP to UDP. The sequence is that of Uridylate kinase from Nostoc sp. (strain PCC 7120 / SAG 25.82 / UTEX 2576).